A 611-amino-acid chain; its full sequence is Homeobox protein BEL1 homolog (611 aa).

Disordered stretches follow at residues 63–87, 101–133, 141–160, and 174–195; these read QIRM…DQNQ, VNND…NPTS, LRPQ…TQHQ, and SHHQ…FQIG. A compositionally biased stretch (low complexity) spans 118–133; the sequence is PSQGLSLSLSSSNPTS. Low complexity predominate over residues 174–183; that stretch reads SHHQNNNNNN. The tract at residues 197–213 is SR/KY domain; sequence SKYLSPAQELLSEFCSL. The disordered stretch occupies residues 225-263; sequence MKHKKKQKGKQQEEWDTSHHSNNDQHDQSATTSSKKHVP. A compositionally biased stretch (basic and acidic residues) spans 234–251; that stretch reads KQQEEWDTSHHSNNDQHD. The segment at 269–340 is BELL domain; that stretch reads EFMELQKRKA…CLKDGLVGQI (72 aa). Positions 275-290 match the Bipartite nuclear localization motif; the sequence is KRKAKLLSMLEELKRR. A DNA-binding region (homeobox) is located at residues 391-453; it reads PWRPQRGLPE…NARVRLWKPM (63 aa).

This sequence belongs to the TALE/BELL homeobox family. As to quaternary structure, may form heterodimeric complexes with TALE/KNOX proteins STM, KNAT1/BP, KNAT2 and KNAT5. Interacts with AG-SEP1 and AG-SEP3 dimers. Interacts with KNATM, isoform KNATM-B. Interacts with BZIP30. Expressed in both floral and vegetative tissues.

The protein resides in the nucleus. Functionally, plays a major role in ovule patterning and in determination of integument identity via its interaction with MADS-box factors. Formation of complex with AG-SEP dimers negatively regulates the carpel identity process and favors the maintenance of ovule identity. BEL1-STM complex maintains the indeterminacy of the inflorescence meristem. Required, with SPL, for cytokinin-induced PIN1 expression in ovules. The chain is Homeobox protein BEL1 homolog (BEL1) from Arabidopsis thaliana (Mouse-ear cress).